Consider the following 75-residue polypeptide: Small ribosomal subunit protein bS18 (75 aa).

This sequence belongs to the bacterial ribosomal protein bS18 family. As to quaternary structure, part of the 30S ribosomal subunit. Forms a tight heterodimer with protein bS6.

Its function is as follows. Binds as a heterodimer with protein bS6 to the central domain of the 16S rRNA, where it helps stabilize the platform of the 30S subunit. The sequence is that of Small ribosomal subunit protein bS18 from Mycoplasma capricolum subsp. capricolum (strain California kid / ATCC 27343 / NCTC 10154).